Consider the following 849-residue polypeptide: Protein translocase subunit SecA (849 aa).

Residues Q85, 103–107, and D493 each bind ATP; that span reads GEGKT. 4 residues coordinate Zn(2+): C832, C834, C843, and H844.

Belongs to the SecA family. As to quaternary structure, monomer and homodimer. Part of the essential Sec protein translocation apparatus which comprises SecA, SecYEG and auxiliary proteins SecDF. Other proteins may also be involved. Requires Zn(2+) as cofactor.

The protein resides in the cell membrane. Its subcellular location is the cytoplasm. The enzyme catalyses ATP + H2O + cellular proteinSide 1 = ADP + phosphate + cellular proteinSide 2.. Functionally, part of the Sec protein translocase complex. Interacts with the SecYEG preprotein conducting channel. Has a central role in coupling the hydrolysis of ATP to the transfer of proteins into and across the cell membrane, serving as an ATP-driven molecular motor driving the stepwise translocation of polypeptide chains across the membrane. This chain is Protein translocase subunit SecA, found in Streptococcus thermophilus (strain CNRZ 1066).